A 715-amino-acid chain; its full sequence is uncharacterized protein (715 aa).

Disordered regions lie at residues 192–216 (ASSV…SVTA), 300–348 (NEEV…TSKR), 461–481 (ASSS…RSNE), and 580–630 (FTVS…KPPK). The segment covering 202-213 (NNTSPYPPSNSS) has biased composition (low complexity). Composition is skewed to polar residues over residues 301–326 (EEVS…NKND) and 472–481 (HLGTSLRSNE). Low complexity predominate over residues 601–614 (TDSSPSDTISSSPT).

This is an uncharacterized protein from Schizosaccharomyces pombe (strain 972 / ATCC 24843) (Fission yeast).